Reading from the N-terminus, the 458-residue chain is ATP synthase subunit beta (458 aa).

Residue 148 to 155 (GGAGVGKT) coordinates ATP.

Belongs to the ATPase alpha/beta chains family. F-type ATPases have 2 components, CF(1) - the catalytic core - and CF(0) - the membrane proton channel. CF(1) has five subunits: alpha(3), beta(3), gamma(1), delta(1), epsilon(1). CF(0) has three main subunits: a(1), b(2) and c(9-12). The alpha and beta chains form an alternating ring which encloses part of the gamma chain. CF(1) is attached to CF(0) by a central stalk formed by the gamma and epsilon chains, while a peripheral stalk is formed by the delta and b chains.

It localises to the cell inner membrane. The enzyme catalyses ATP + H2O + 4 H(+)(in) = ADP + phosphate + 5 H(+)(out). Its function is as follows. Produces ATP from ADP in the presence of a proton gradient across the membrane. The catalytic sites are hosted primarily by the beta subunits. The polypeptide is ATP synthase subunit beta (Francisella tularensis subsp. novicida (strain U112)).